Reading from the N-terminus, the 72-residue chain is Translation initiation factor IF-1 (72 aa).

In terms of domain architecture, S1-like spans Ala2–Lys72.

Belongs to the IF-1 family. As to quaternary structure, component of the 30S ribosomal translation pre-initiation complex which assembles on the 30S ribosome in the order IF-2 and IF-3, IF-1 and N-formylmethionyl-tRNA(fMet); mRNA recruitment can occur at any time during PIC assembly.

The protein localises to the cytoplasm. One of the essential components for the initiation of protein synthesis. Stabilizes the binding of IF-2 and IF-3 on the 30S subunit to which N-formylmethionyl-tRNA(fMet) subsequently binds. Helps modulate mRNA selection, yielding the 30S pre-initiation complex (PIC). Upon addition of the 50S ribosomal subunit IF-1, IF-2 and IF-3 are released leaving the mature 70S translation initiation complex. The chain is Translation initiation factor IF-1 from Lactococcus lactis subsp. lactis (strain IL1403) (Streptococcus lactis).